Here is a 348-residue protein sequence, read N- to C-terminus: uncharacterized protein (348 aa).

Its function is as follows. May be involved in apoptosis regulation. This is an uncharacterized protein from Mus musculus (Mouse).